Consider the following 422-residue polypeptide: MRLPCEVEVRSCHLPTLGLKSRGKGVRAVVSLCQAPGRNELQPEARAEPGGHACLLVSTMKDRQGTSYKLRENIEQLFTKFVDEGKATVRLKEPPVDICLSKANPGNLKTLLSAMRLAHRGCDVNTPLSTLKPVKTSEFEKYKTKMVITSKKDYPLSKNFPYFLEHLQASYCSLARVDMRMLCLKNLTKLDLSHNCIKKLPATIGDLTHLQELNLNDNQLETFSVPLCTSTLQKSLHSLDLSKNKIKALPVQFCQFRELTNLNLNDNELIHLPFKIGQLTNLRFLSAARNKLRNLPSEFKMLSLEYLDLFGNTFEKPEVIPIIKLQVPLTLLESCEQAVLFYRIPYGPDIIPYHLCQDLDTAKTCVCGRFCLQSFIQGTTTMNLHSVAHTVVLVDSMGRTEAPVVSYFCSLTCFVKSSDMLN.

LRR repeat units lie at residues 184–207 (LKNLTKLDLSHNCIKKLPATIGDL), 209–230 (HLQELNLNDNQLETFSVPLCTS), 233–258 (QKSLHSLDLSKNKIKALPVQFCQFRE), 260–279 (TNLNLNDNELIHLPFKIGQL), 280–301 (TNLRFLSAARNKLRNLPSEFKM), and 304–327 (LEYLDLFGNTFEKPEVIPIIKLQV).

In terms of assembly, component of the probable ECS(LRR1) E3 ubiquitin-protein ligase complex which contains CUL2, RBX1, Elongin BC complex and LRR1. Interacts with CUL2, RBX1, ELOB and ELOC.

Its subcellular location is the nucleus. It functions in the pathway protein modification; protein ubiquitination. Functionally, substrate recognition subunit of an ECS (Elongin BC-CUL2/5-SOCS-box protein) E3 ubiquitin-protein ligase complex which mediates the ubiquitination and subsequent proteasomal degradation of target proteins. ECS(LRR1) ubiquitinates MCM7 and promotes CMG replisome disassembly by VCP and chromatin extraction during S-phase. May negatively regulate the 4-1BB-mediated signaling cascades which result in the activation of NK-kappaB and JNK1. This chain is Leucine-rich repeat protein 1, found in Mus musculus (Mouse).